The sequence spans 141 residues: Putative pre-16S rRNA nuclease (141 aa).

The protein belongs to the YqgF nuclease family.

The protein resides in the cytoplasm. Its function is as follows. Could be a nuclease involved in processing of the 5'-end of pre-16S rRNA. The chain is Putative pre-16S rRNA nuclease from Cupriavidus necator (strain ATCC 17699 / DSM 428 / KCTC 22496 / NCIMB 10442 / H16 / Stanier 337) (Ralstonia eutropha).